A 910-amino-acid polypeptide reads, in one-letter code: MEAKVEEKEPEPVENAGPDAPVRLTPMMEQYIEIKAANVDSLLFYRMGDFYELFFDDAVAASAALGITLTKRGKHLGEDIPMCGVPVHAADDYLQKLIAKGYRVAVCEQVEDPAEAKKRGSKSVVKRDVIRLVTPGTLTEEKLLDPAQANFLMAMGRTRGDGALALAWIDISTGTFRVAETTPDRLFADIMRVDPRELVVADSAFHDEELRPVFDLIGKAVTPQPATLFDSAAAQTRIQHYFNVATLDGFGQFSRPELSAISGAIAYIEKTQISERPPLMRPEREHEGGTLFIDPATRASLELARTMSGNRDGSLLKAIDRTVTGGGARLLAERLTAPLTSPKEIALRLDSVSWCLSEQTLCEALRLELKGVPDMPRALSRLAVGRGGPRDLGALACGFEAAGGIASLLDGALLPDELAAAREAIEKMPAGFAAHLDRALADELPLLKRDGGFVREGYNSELDEMRALRDQSRRVIAGLQADYIEETGIKSLKIKHNNVLGYFIEVTANNSGAMTDTDEAKSRFIHRQTMANAMRFTTTELAELESKIANAADRALSIELAIFEELTAEAVAHADSIRAAASALSVFDVSTALAVLAEERGYCRPHVDDSLSFNIVAGRHPVVEQALRRQAANPFVANDCDLSPQRDGGDGAIWLLTGPNMGGKSTFLRQNALIAILAQMGSFVPAGSAHIGVVDRLFSRVGASDDLARGRSTFMVEMVETAAILNQAGEHSLVILDEIGRGTATFDGLSIAWAAVEYLHEKNRCRALFATHFHEMTALSEKLERLSNVTMRVKEWDNDVIFLHEVAKGAADRSYGVQVARLAGLPEAVVNRARDVLHQLEAGETSGKADRLIDDLPLFSVMLQQEKPKPQIQAKDSELANAVAAISPDELTPREALDLIYKLKELAGKA.

The span at M1 to E11 shows a compositional bias: basic and acidic residues. Positions M1 to P21 are disordered. G658–S665 is an ATP binding site.

Belongs to the DNA mismatch repair MutS family.

Its function is as follows. This protein is involved in the repair of mismatches in DNA. It is possible that it carries out the mismatch recognition step. This protein has a weak ATPase activity. The sequence is that of DNA mismatch repair protein MutS from Brucella canis (strain ATCC 23365 / NCTC 10854 / RM-666).